A 286-amino-acid chain; its full sequence is Bifunctional protein FolD (286 aa).

NADP(+) is bound by residues 168–170, threonine 195, and valine 236; that span reads GRG.

Belongs to the tetrahydrofolate dehydrogenase/cyclohydrolase family. As to quaternary structure, homodimer.

The enzyme catalyses (6R)-5,10-methylene-5,6,7,8-tetrahydrofolate + NADP(+) = (6R)-5,10-methenyltetrahydrofolate + NADPH. It catalyses the reaction (6R)-5,10-methenyltetrahydrofolate + H2O = (6R)-10-formyltetrahydrofolate + H(+). It functions in the pathway one-carbon metabolism; tetrahydrofolate interconversion. Its function is as follows. Catalyzes the oxidation of 5,10-methylenetetrahydrofolate to 5,10-methenyltetrahydrofolate and then the hydrolysis of 5,10-methenyltetrahydrofolate to 10-formyltetrahydrofolate. The chain is Bifunctional protein FolD from Mycolicibacterium gilvum (strain PYR-GCK) (Mycobacterium gilvum (strain PYR-GCK)).